A 148-amino-acid chain; its full sequence is UPF0260 protein KPN78578_22800 (148 aa).

Belongs to the UPF0260 family.

This chain is UPF0260 protein KPN78578_22800, found in Klebsiella pneumoniae subsp. pneumoniae (strain ATCC 700721 / MGH 78578).